The following is a 410-amino-acid chain: MGSKKRSPQHPAAAAPPPAVGGGGGGEVSGDGGASTANGPVVPKPSEVAPFLTKVYDMVSDPATDNVISWAEGGGSFVIWDSHAFERDLHRHFKHSNFTSFIRQLNTYGFRKVHPDRWEWANEGFIMGQKHLLKTIKRRKKSSQESPSEIQKAPVKTAPGTENIEIGKYGGLEKEVETLKRDKALLMQQLVDLRHYQQTSNLEVQNLIERLQVMEQNQQQMMALLAIVVQNPSFLNQLVQQQQQQRRSNWWSPDGSKKRRFHALEQGPVTDQETSGRGAHIVEYLPPVPETSGQVNPVEGAICSANSQPVPSPAVATPMDMQTSNVADTLGSSEEPFADNSTLHEWDDNDMQLLFDDNLDPILPPFENDGQMGPPLSVQDYDFPQLEQDCLMEAQYNSNNPQYADVITEA.

The tract at residues 1–44 (MGSKKRSPQHPAAAAPPPAVGGGGGGEVSGDGGASTANGPVVPK) is disordered. Positions 20 to 33 (VGGGGGGEVSGDGG) are enriched in gly residues. Residues 171–246 (GLEKEVETLK…QLVQQQQQQR (76 aa)) adopt a coiled-coil conformation. Residues 179–229 (LKRDKALLMQQLVDLRHYQQTSNLEVQNLIERLQVMEQNQQQMMALLAIVV) form a hydrophobic repeat HR-A/B region. The short motif at 256–260 (SKKRR) is the Nuclear localization signal element. The short motif at 279–290 (AHIVEYLPPVPE) is the Nuclear export signal element.

This sequence belongs to the HSF family. Class A subfamily. In terms of assembly, homotrimer. Exhibits temperature-dependent phosphorylation.

It is found in the cytoplasm. Its subcellular location is the nucleus. Functionally, transcriptional regulator that specifically binds DNA of heat shock promoter elements (HSE). This is Heat stress transcription factor A-9 (HSFA9) from Oryza sativa subsp. japonica (Rice).